Reading from the N-terminus, the 338-residue chain is tRNA N6-adenosine threonylcarbamoyltransferase (338 aa).

Fe cation-binding residues include His-110 and His-114. Substrate is bound by residues 132-136 (VLSGG), Asp-165, Gly-178, and Asn-274. Asp-298 is a binding site for Fe cation.

It belongs to the KAE1 / TsaD family. Fe(2+) serves as cofactor.

The protein localises to the cytoplasm. It carries out the reaction L-threonylcarbamoyladenylate + adenosine(37) in tRNA = N(6)-L-threonylcarbamoyladenosine(37) in tRNA + AMP + H(+). In terms of biological role, required for the formation of a threonylcarbamoyl group on adenosine at position 37 (t(6)A37) in tRNAs that read codons beginning with adenine. Is involved in the transfer of the threonylcarbamoyl moiety of threonylcarbamoyl-AMP (TC-AMP) to the N6 group of A37, together with TsaE and TsaB. TsaD likely plays a direct catalytic role in this reaction. This chain is tRNA N6-adenosine threonylcarbamoyltransferase, found in Borrelia recurrentis (strain A1).